The following is a 612-amino-acid chain: Adherence factor (612 aa).

Composition is skewed to low complexity over residues 1–18, 47–68, 94–106, 115–141, 182–203, and 218–228; these read MSSF…NLSS, SSMM…QQQQ, LQTQ…SATT, YNQQ…NNMQ, QSAQ…QPRS, and SRQVSGSGRST. 7 disordered regions span residues 1–20, 46–68, 94–143, 179–273, 443–480, 497–527, and 546–612; these read MSSF…SSFQ, ASSM…QQQQ, LQTQ…MQFF, PQLQ…NNNK, KEKK…NTNN, SQLM…LSNN, and SQEQ…KQFY. Over residues 230–240 the composition is skewed to polar residues; sequence AKKQSAITSGS. The span at 254-272 shows a compositional bias: low complexity; that stretch reads TSVANSTSTTTMTTTNNNN. The span at 443–457 shows a compositional bias: basic and acidic residues; the sequence is KEKKLTEKTIEQREQ. 2 stretches are compositionally biased toward polar residues: residues 465–480 and 497–512; these read ANHS…NTNN and SQLM…ATKI. Positions 555–571 are enriched in basic residues; the sequence is NQHHHNHQQHPLIHHHQ. Over residues 585–606 the composition is skewed to low complexity; that stretch reads PSTIPTSSLSIQQQQQQQQQQL.

Functionally, surface antigen mediating adhesion and aggregation in S.cerevisiae. The sequence is that of Adherence factor (ADF1) from Candida albicans (strain SC5314 / ATCC MYA-2876) (Yeast).